The chain runs to 203 residues: Recombination protein RecR (203 aa).

The segment at 56-71 (CAVCGNVSDDERCRIC) adopts a C4-type zinc-finger fold. Positions 79-179 (SVVCVVEEPK…TVTRIASGLP (101 aa)) constitute a Toprim domain.

The protein belongs to the RecR family.

May play a role in DNA repair. It seems to be involved in an RecBC-independent recombinational process of DNA repair. It may act with RecF and RecO. This is Recombination protein RecR from Mycobacterium avium (strain 104).